The primary structure comprises 176 residues: Nucleoside triphosphate/diphosphate phosphatase (176 aa).

R23 acts as the Proton donor in catalysis. Positions 87, 103, 105, 107, 120, and 123 each coordinate Mg(2+).

It belongs to the Ntdp family. The cofactor is Mg(2+).

The enzyme catalyses a ribonucleoside 5'-triphosphate + H2O = a ribonucleoside 5'-diphosphate + phosphate + H(+). It catalyses the reaction a ribonucleoside 5'-diphosphate + H2O = a ribonucleoside 5'-phosphate + phosphate + H(+). Has nucleoside phosphatase activity towards nucleoside triphosphates and nucleoside diphosphates. This is Nucleoside triphosphate/diphosphate phosphatase from Bacillus cereus (strain B4264).